Reading from the N-terminus, the 460-residue chain is MASITRDIFKAYDIRGIVGKTLTDDAAYFIGRAIAAKAAEKGIARIALGRDGRLSGPELMEHIQRGLTDSGISVLNVGMVTTPMLYFAAVNECGGSGVMITGSHNPPDYNGFKMMLGGDTLAGEAIQELLAIVEKDGFVAADKQGSVTEKDISGAYHDHIVGHVKLKRPINIAIDAGNGVGGAFAGKLYKGLGNEVTELFCEVDGNFPNHHPDPSKPENLQDLIAALKNGDAEIGLAFDGDADRLGVVTKDGNIIYPDRQLMLFAQDVLNRNPGAKVIFDVKSTRLLAPWIKEHGGEAIMEKTGHSFIKSAMKKTGALVAGEMSGHVFFKERWFGFDDGLYAGARLLEILSASDNPSEVLDNLPQSISTPELNISLPEGSNGHQVIEELAAKAEFEGATEIITIDGLRVEFPDGFGLMRASNTTPILVLRFEADTQAAIERIQNRFKAVIESNPHLIWPL.

S103 acts as the Phosphoserine intermediate in catalysis. Residue S103 coordinates Mg(2+). Residues 103–104 (SH) and K113 each bind substrate. 3 residues coordinate Mg(2+): D239, D241, and D243. Residues 243–244 (DR), T303, and 322–324 (EMS) each bind substrate.

The protein belongs to the phosphohexose mutase family. It depends on Mg(2+) as a cofactor.

The protein resides in the cytoplasm. The enzyme catalyses alpha-D-glucose 1-phosphate = alpha-D-glucose 6-phosphate. Functionally, this enzyme participates in both the breakdown and synthesis of glucose. The polypeptide is Phosphoglucomutase (pgm) (Neisseria gonorrhoeae).